The primary structure comprises 1733 residues: ATP-binding cassette sub-family A member 17 (1733 aa).

7 helical membrane passes run 22–42 (TLIT…VLYL), 262–282 (FPLL…NSVL), 306–326 (AWFI…TVLF), 342–362 (TLIF…AFMM), 372–392 (GTVI…YITF), 403–423 (ILSC…ISLF), and 444–464 (FAQV…IAFL). Positions 519 to 752 (IEIQHLYKVF…YGAGYYMTII (234 aa)) constitute an ABC transporter 1 domain. ATP is bound at residue 555 to 562 (GHNGAGKT). N-linked (GlcNAc...) asparagine glycosylation occurs at Asn609. Transmembrane regions (helical) follow at residues 906-926 (LVLS…LTFF), 1082-1102 (LVVN…ILTV), 1128-1148 (LLWD…VFLW), 1160-1180 (IPAV…LVYT), 1192-1212 (CVKL…LVTV), 1230-1250 (IFLI…YYNF), and 1287-1307 (IGKY…MLFL). The region spanning 1366-1599 (LVVKEVSKVY…FGISYSLQAK (234 aa)) is the ABC transporter 2 domain. Residue 1401 to 1408 (GLNGAGKT) participates in ATP binding. The segment covering 1681–1692 (ESSTKEQIQQEQ) has biased composition (polar residues). Positions 1681 to 1733 (ESSTKEQIQQEQAVLASPSPPSNSRPISSPPSRLSSPTPKPLPSPPPSEPILL) are disordered. Residues 1704–1717 (SRPISSPPSRLSSP) are compositionally biased toward low complexity. The span at 1718-1733 (TPKPLPSPPPSEPILL) shows a compositional bias: pro residues.

It belongs to the ABC transporter superfamily. ABCA family. N-glycosylated. In terms of tissue distribution, in the testis, detected predominantly in elongated spermatids at the late stage of germ cell development and in sperm, with no expression detected in immature germ cells such as spermatogonia and spermatocytes or in somatic cells such as Sertoli cells (at protein level). Expressed in the head and tail midpiece of elongated spermatids and sperm (at protein level). Expressed exclusively in the testis.

Its subcellular location is the endoplasmic reticulum membrane. It is found in the cytoplasm. The enzyme catalyses cholesterol(in) + ATP + H2O = cholesterol(out) + ADP + phosphate + H(+). Functionally, promotes cholesterol efflux from sperm which renders sperm capable of fertilization. Has also been shown to decrease levels of intracellular esterified neutral lipids including cholesteryl esters, fatty acid esters and triacylglycerols. The sequence is that of ATP-binding cassette sub-family A member 17 from Mus musculus (Mouse).